Here is a 474-residue protein sequence, read N- to C-terminus: tRNA-2-methylthio-N(6)-dimethylallyladenosine synthase (474 aa).

Positions 3–120 (KKLHIKTWGC…LPEMINHVQE (118 aa)) constitute an MTTase N-terminal domain. 6 residues coordinate [4Fe-4S] cluster: cysteine 12, cysteine 49, cysteine 83, cysteine 157, cysteine 161, and cysteine 164. In terms of domain architecture, Radical SAM core spans 143–375 (RAEGPTAFVS…QQRISQQAME (233 aa)). The 64-residue stretch at 378–441 (RKMVGTVQRV…ASSLRGILLR (64 aa)) folds into the TRAM domain.

Belongs to the methylthiotransferase family. MiaB subfamily. As to quaternary structure, monomer. Requires [4Fe-4S] cluster as cofactor.

The protein localises to the cytoplasm. The catalysed reaction is N(6)-dimethylallyladenosine(37) in tRNA + (sulfur carrier)-SH + AH2 + 2 S-adenosyl-L-methionine = 2-methylsulfanyl-N(6)-dimethylallyladenosine(37) in tRNA + (sulfur carrier)-H + 5'-deoxyadenosine + L-methionine + A + S-adenosyl-L-homocysteine + 2 H(+). Catalyzes the methylthiolation of N6-(dimethylallyl)adenosine (i(6)A), leading to the formation of 2-methylthio-N6-(dimethylallyl)adenosine (ms(2)i(6)A) at position 37 in tRNAs that read codons beginning with uridine. This is tRNA-2-methylthio-N(6)-dimethylallyladenosine synthase from Yersinia pseudotuberculosis serotype O:3 (strain YPIII).